Consider the following 456-residue polypeptide: RuvB-like 1 (456 aa).

A Glycyl lysine isopeptide (Lys-Gly) (interchain with G-Cter in SUMO2) cross-link involves residue Lys-2. ATP is bound at residue 70–77; the sequence is GPPGTGKT. Lys-225 is covalently cross-linked (Glycyl lysine isopeptide (Lys-Gly) (interchain with G-Cter in SUMO1); alternate). Residue Lys-225 forms a Glycyl lysine isopeptide (Lys-Gly) (interchain with G-Cter in SUMO2); alternate linkage. A Glycyl lysine isopeptide (Lys-Gly) (interchain with G-Cter in SUMO2) cross-link involves residue Lys-445. N6-acetyllysine is present on Lys-453.

It belongs to the RuvB family. Forms homohexameric rings. Can form a dodecamer with RUVBL2 made of two stacked hexameric rings; however, even though RUVBL1 and RUVBL2 are present in equimolar ratio, the oligomeric status of each hexamer is not known. Oligomerization may regulate binding to nucleic acids and conversely, binding to nucleic acids may affect the dodecameric assembly. Interaction of the complex with DHX34 results in conformational changes of the N-terminus of the RUVBL2 subunits, resulting in loss of nucleotide binding ability and ATP hydrolysis of the complex. Interacts with the transcriptional activation domain of MYC. Component of the RNA polymerase II holoenzyme complex. May also act to bridge the LEF1/TCF1-CTNNB1 complex and TBP. Component of the NuA4 histone acetyltransferase complex which contains the catalytic subunit KAT5/TIP60 and the subunits EP400, TRRAP/PAF400, BRD8/SMAP, EPC1, DMAP1/DNMAP1, RUVBL1/TIP49, RUVBL2, ING3, actin, ACTL6A/BAF53A, MORF4L1/MRG15, MORF4L2/MRGX, MRGBP, YEATS4/GAS41, VPS72/YL1 and MEAF6. The NuA4 complex interacts with MYC and the adenovirus E1A protein. RUVBL1 interacts with EP400. Component of a NuA4-related complex which contains EP400, TRRAP/PAF400, SRCAP, BRD8/SMAP, EPC1, DMAP1/DNMAP1, RUVBL1/TIP49, RUVBL2, actin, ACTL6A/BAF53A, VPS72 and YEATS4/GAS41. Component of the BAF53 complex, at least composed of ACTL6A/BAF53A, RUVBL1/TIP49, SMARCA2/BRM, and TRRAP/PAF400. Component of some MLL1/MLL complex, at least composed of the core components KMT2A/MLL1, ASH2L, HCFC1/HCF1, WDR5 and RBBP5, as well as the facultative components BACC1, CHD8, E2F6, HSP70, INO80C, KANSL1, LAS1L, MAX, MCRS1, MGA, MYST1/MOF, PELP1, PHF20, PRP31, RING2, RUVB1/TIP49A, RUVB2/TIP49B, SENP3, TAF1, TAF4, TAF6, TAF7, TAF9 and TEX10. Associates with alpha and gamma tubulins, particularly during metaphase and early anaphase. Interacts with NPAT. Component of the chromatin-remodeling INO80 complex; specifically part of a complex module associated with the helicase ATP-binding and the helicase C-terminal domain of INO80. Interacts with IGHMBP2. Interacts with OFD1. Interacts with HINT1. Component of a complex with USP49 and PSMC5. Component of a SWR1-like complex. Component of the R2TP complex composed at least of RUVBL1, RUVBL2, RPAP3 and PIHD1. Component of the PAQosome complex which is responsible for the biogenesis of several protein complexes and which consists of R2TP complex members RUVBL1, RUVBL2, RPAP3 and PIH1D1, URI complex members PFDN2, PFDN6, PDRG1, UXT and URI1 as well as ASDURF, POLR2E and DNAAF10/WDR92. Interacts with PIH1D1. Interacts with ITFG1. Interacts with WAC; WAC positively regulates MTOR activity by promoting the assembly of the TTT complex composed of TELO2, TTI1 and TTI2 and the RUVBL complex composed of RUVBL1 and RUVBL2 into the TTT-RUVBL complex which leads to the dimerization of the mTORC1 complex and its subsequent activation. The RUVBL1/RUVBL2 complex interacts with ZNHIT1 (via HIT-type zinc finger), ZNHIT3 (via HIT-type zinc finger), ZNHIT6 (via HIT-type zinc finger) and DDX59/ZNHIT5 (via HIT-type zinc finger) in the presence of ADP. Interacts with NOPCHAP1; the interaction is direct and disrupted upon ATP binding. Interacts with SMG1. Interacts with NOP2, NOP56 and NUFIP1.

The protein localises to the nucleus matrix. The protein resides in the nucleus. It localises to the nucleoplasm. It is found in the cytoplasm. Its subcellular location is the membrane. The protein localises to the cytoskeleton. The protein resides in the microtubule organizing center. It localises to the centrosome. It is found in the dynein axonemal particle. It carries out the reaction ATP + H2O = ADP + phosphate + H(+). Possesses single-stranded DNA-stimulated ATPase and ATP-dependent DNA helicase (3' to 5') activity; hexamerization is thought to be critical for ATP hydrolysis and adjacent subunits in the ring-like structure contribute to the ATPase activity. Component of the NuA4 histone acetyltransferase complex which is involved in transcriptional activation of select genes principally by acetylation of nucleosomal histones H4 and H2A. This modification may both alter nucleosome-DNA interactions and promote interaction of the modified histones with other proteins which positively regulate transcription. This complex may be required for the activation of transcriptional programs associated with oncogene and proto-oncogene mediated growth induction, tumor suppressor mediated growth arrest and replicative senescence, apoptosis, and DNA repair. The NuA4 complex ATPase and helicase activities seem to be, at least in part, contributed by the association of RUVBL1 and RUVBL2 with EP400. NuA4 may also play a direct role in DNA repair when recruited to sites of DNA damage. Component of a SWR1-like complex that specifically mediates the removal of histone H2A.Z/H2AZ1 from the nucleosome. Proposed core component of the chromatin remodeling INO80 complex which exhibits DNA- and nucleosome-activated ATPase activity and catalyzes ATP-dependent nucleosome sliding. Plays an essential role in oncogenic transformation by MYC and also modulates transcriptional activation by the LEF1/TCF1-CTNNB1 complex. Essential for cell proliferation. May be able to bind plasminogen at cell surface and enhance plasminogen activation. The chain is RuvB-like 1 (Ruvbl1) from Mus musculus (Mouse).